The chain runs to 862 residues: DNA topoisomerase 3-beta-1 (862 aa).

Residues 3–153 (TVLMVAEKPS…EKTVFRARFS (151 aa)) enclose the Toprim domain. The Topo IA-type catalytic domain maps to 171–593 (DHNEALSVDA…HTLDVFKRKF (423 aa)). Tyrosine 336 serves as the catalytic O-(5'-phospho-DNA)-tyrosine intermediate. The segment covering 821-851 (PMHRGGPGRRQGRGRGRARRPPGKPNPRRPK) has biased composition (basic residues). The tract at residues 821–854 (PMHRGGPGRRQGRGRGRARRPPGKPNPRRPKDKM) is disordered.

This sequence belongs to the type IA topoisomerase family. As to expression, isoform 1 is found in testis, heart and skeletal muscle. A 4 kb transcript which probably represents isoform 2 is found in thymus, kidney and pancreas.

It carries out the reaction ATP-independent breakage of single-stranded DNA, followed by passage and rejoining.. In terms of biological role, releases the supercoiling and torsional tension of DNA introduced during the DNA replication and transcription by transiently cleaving and rejoining one strand of the DNA duplex. Introduces a single-strand break via transesterification at a target site in duplex DNA. The scissile phosphodiester is attacked by the catalytic tyrosine of the enzyme, resulting in the formation of a DNA-(5'-phosphotyrosyl)-enzyme intermediate and the expulsion of a 3'-OH DNA strand. The free DNA strand than undergoes passage around the unbroken strand thus removing DNA supercoils. Finally, in the religation step, the DNA 3'-OH attacks the covalent intermediate to expel the active-site tyrosine and restore the DNA phosphodiester backbone. Possesses negatively supercoiled DNA relaxing activity. This is DNA topoisomerase 3-beta-1 (TOP3B) from Homo sapiens (Human).